A 378-amino-acid polypeptide reads, in one-letter code: Phosphoserine aminotransferase (378 aa).

Arginine 53 is an L-glutamate binding site. Residues tryptophan 117, threonine 167, aspartate 190, and glutamine 213 each coordinate pyridoxal 5'-phosphate. Lysine 214 bears the N6-(pyridoxal phosphate)lysine mark. Residue 255 to 256 (NT) participates in pyridoxal 5'-phosphate binding.

It belongs to the class-V pyridoxal-phosphate-dependent aminotransferase family. SerC subfamily. In terms of assembly, homodimer. It depends on pyridoxal 5'-phosphate as a cofactor.

Its subcellular location is the cytoplasm. It carries out the reaction O-phospho-L-serine + 2-oxoglutarate = 3-phosphooxypyruvate + L-glutamate. The enzyme catalyses 4-(phosphooxy)-L-threonine + 2-oxoglutarate = (R)-3-hydroxy-2-oxo-4-phosphooxybutanoate + L-glutamate. It participates in amino-acid biosynthesis; L-serine biosynthesis; L-serine from 3-phospho-D-glycerate: step 2/3. Its pathway is cofactor biosynthesis; pyridoxine 5'-phosphate biosynthesis; pyridoxine 5'-phosphate from D-erythrose 4-phosphate: step 3/5. Catalyzes the reversible conversion of 3-phosphohydroxypyruvate to phosphoserine and of 3-hydroxy-2-oxo-4-phosphonooxybutanoate to phosphohydroxythreonine. This Ralstonia pickettii (strain 12J) protein is Phosphoserine aminotransferase.